Consider the following 134-residue polypeptide: DNA-binding protein inhibitor ID-2 (134 aa).

Phosphoserine occurs at positions 14 and 25. A bHLH domain is found at 23–75; the sequence is SRSKTPVDDPMSLLYNMNDCYSKLKELVPSIPQNKKVSKMEILQHVIDYILDL. Positions 106-115 match the Nuclear export signal motif; it reads LNTDISILSL.

As to quaternary structure, interacts with GATA4 and NKX2-5. Interacts with NR0B2. Interacts with CLOCK and BMAL1. Interacts with IFI204. Interacts with NEDD9/HEF1. Interacts with ASB4; this interaction promotes ID2 proteasomal degradation. In terms of processing, ubiquitinated in a ASB4-depedent manner, leading to proteasomal degradation. Phosphorylated in vitro by CDK1, PKA and PKC.

Its subcellular location is the cytoplasm. It localises to the nucleus. Its function is as follows. Transcriptional regulator (lacking a basic DNA binding domain) which negatively regulates the basic helix-loop-helix (bHLH) transcription factors by forming heterodimers and inhibiting their DNA binding and transcriptional activity. Implicated in regulating a variety of cellular processes, including cellular growth, senescence, differentiation, apoptosis, angiogenesis, and neoplastic transformation. Inhibits skeletal muscle and cardiac myocyte differentiation. Regulates the circadian clock by repressing the transcriptional activator activity of the CLOCK-BMAL1 heterodimer. Restricts the CLOCK and BMAL1 localization to the cytoplasm. Plays a role in both the input and output pathways of the circadian clock: in the input component, is involved in modulating the magnitude of photic entrainment and in the output component, contributes to the regulation of a variety of liver clock-controlled genes involved in lipid metabolism. This Sus scrofa (Pig) protein is DNA-binding protein inhibitor ID-2 (ID2).